The primary structure comprises 218 residues: Uracil-DNA glycosylase (218 aa).

Aspartate 60 functions as the Proton acceptor in the catalytic mechanism.

This sequence belongs to the uracil-DNA glycosylase (UDG) superfamily. UNG family.

It is found in the cytoplasm. The enzyme catalyses Hydrolyzes single-stranded DNA or mismatched double-stranded DNA and polynucleotides, releasing free uracil.. In terms of biological role, excises uracil residues from the DNA which can arise as a result of misincorporation of dUMP residues by DNA polymerase or due to deamination of cytosine. This is Uracil-DNA glycosylase from Francisella philomiragia subsp. philomiragia (strain ATCC 25017 / CCUG 19701 / FSC 153 / O#319-036).